Reading from the N-terminus, the 370-residue chain is Probable trehalose-phosphate phosphatase 6 (370 aa).

Belongs to the trehalose phosphatase family. It depends on a divalent metal cation as a cofactor.

It catalyses the reaction alpha,alpha-trehalose 6-phosphate + H2O = alpha,alpha-trehalose + phosphate. It participates in glycan biosynthesis; trehalose biosynthesis. In terms of biological role, removes the phosphate from trehalose 6-phosphate to produce free trehalose. Trehalose accumulation in plant may improve abiotic stress tolerance. The protein is Probable trehalose-phosphate phosphatase 6 (TPP6) of Oryza sativa subsp. japonica (Rice).